The primary structure comprises 116 residues: Class I hydrophobin 1 (116 aa).

A signal peptide spans methionine 1–alanine 19. Intrachain disulfides connect cysteine 35–cysteine 95, cysteine 42–cysteine 89, cysteine 43–cysteine 76, and cysteine 96–cysteine 109. N-linked (GlcNAc...) asparagine glycosylation is found at asparagine 44 and asparagine 100.

This sequence belongs to the fungal hydrophobin family. In terms of assembly, self-assembles to form functional amyloid fibrils called rodlets. Self-assembly into fibrillar rodlets occurs spontaneously at hydrophobic:hydrophilic interfaces and the rodlets further associate laterally to form amphipathic monolayers.

Its subcellular location is the secreted. The protein resides in the cell wall. Aerial growth, conidiation, and dispersal of filamentous fungi in the environment rely upon a capability of their secreting small amphipathic proteins called hydrophobins (HPBs) with low sequence identity. Class I can self-assemble into an outermost layer of rodlet bundles on aerial cell surfaces, conferring cellular hydrophobicity that supports fungal growth, development and dispersal; whereas Class II form highly ordered films at water-air interfaces through intermolecular interactions but contribute nothing to the rodlet structure. The chain is Class I hydrophobin 1 from Pleurotus ostreatus (Oyster mushroom).